The following is a 385-amino-acid chain: Succinate--CoA ligase [ADP-forming] subunit beta (385 aa).

The ATP-grasp domain maps to 9–244; it reads KEILRKYGVP…QDEEDPLETR (236 aa). ATP contacts are provided by residues lysine 46, 53 to 55, glutamate 99, cysteine 102, and glutamate 107; that span reads GRG. Mg(2+) contacts are provided by asparagine 199 and aspartate 213. Substrate is bound by residues asparagine 264 and 321-323; that span reads GIM.

It belongs to the succinate/malate CoA ligase beta subunit family. Heterotetramer of two alpha and two beta subunits. The cofactor is Mg(2+).

It carries out the reaction succinate + ATP + CoA = succinyl-CoA + ADP + phosphate. The catalysed reaction is GTP + succinate + CoA = succinyl-CoA + GDP + phosphate. It functions in the pathway carbohydrate metabolism; tricarboxylic acid cycle; succinate from succinyl-CoA (ligase route): step 1/1. Functionally, succinyl-CoA synthetase functions in the citric acid cycle (TCA), coupling the hydrolysis of succinyl-CoA to the synthesis of either ATP or GTP and thus represents the only step of substrate-level phosphorylation in the TCA. The beta subunit provides nucleotide specificity of the enzyme and binds the substrate succinate, while the binding sites for coenzyme A and phosphate are found in the alpha subunit. In Rickettsia bellii (strain OSU 85-389), this protein is Succinate--CoA ligase [ADP-forming] subunit beta.